Reading from the N-terminus, the 206-residue chain is MARYLGPKLKLTRREGTDLFLKSGVRAIDSKCKLEAAPGQHGARKARLSEYGVQLREKQKVRRTYGVLEKQFRNYYKDAARLKGNTGENLLTLLETRLDNVVYRMGFGATRAEARQLVSHKSIMVNGRVVNIPSFKVSANDVISVREKSQKQARIKAALEVASQREKPTWVEVDAAKMEGAFKRLPERSDLSADINEQLIVELYSK.

The S4 RNA-binding domain occupies 96–156 (TRLDNVVYRM…EKSQKQARIK (61 aa)).

It belongs to the universal ribosomal protein uS4 family. Part of the 30S ribosomal subunit. Contacts protein S5. The interaction surface between S4 and S5 is involved in control of translational fidelity.

In terms of biological role, one of the primary rRNA binding proteins, it binds directly to 16S rRNA where it nucleates assembly of the body of the 30S subunit. With S5 and S12 plays an important role in translational accuracy. This Shewanella loihica (strain ATCC BAA-1088 / PV-4) protein is Small ribosomal subunit protein uS4.